Consider the following 96-residue polypeptide: Small ribosomal subunit protein bS16 (96 aa).

The protein belongs to the bacterial ribosomal protein bS16 family.

In Vesicomyosocius okutanii subsp. Calyptogena okutanii (strain HA), this protein is Small ribosomal subunit protein bS16.